A 92-amino-acid chain; its full sequence is Small ribosomal subunit protein uS19 (92 aa).

This sequence belongs to the universal ribosomal protein uS19 family.

Protein S19 forms a complex with S13 that binds strongly to the 16S ribosomal RNA. The sequence is that of Small ribosomal subunit protein uS19 from Bifidobacterium animalis subsp. lactis (strain AD011).